The primary structure comprises 145 residues: D-aminoacyl-tRNA deacylase (145 aa).

Residues 137–138 carry the Gly-cisPro motif, important for rejection of L-amino acids motif; sequence GP.

The protein belongs to the DTD family. Homodimer.

Its subcellular location is the cytoplasm. The enzyme catalyses glycyl-tRNA(Ala) + H2O = tRNA(Ala) + glycine + H(+). The catalysed reaction is a D-aminoacyl-tRNA + H2O = a tRNA + a D-alpha-amino acid + H(+). Its function is as follows. An aminoacyl-tRNA editing enzyme that deacylates mischarged D-aminoacyl-tRNAs. Also deacylates mischarged glycyl-tRNA(Ala), protecting cells against glycine mischarging by AlaRS. Acts via tRNA-based rather than protein-based catalysis; rejects L-amino acids rather than detecting D-amino acids in the active site. By recycling D-aminoacyl-tRNA to D-amino acids and free tRNA molecules, this enzyme counteracts the toxicity associated with the formation of D-aminoacyl-tRNA entities in vivo and helps enforce protein L-homochirality. The protein is D-aminoacyl-tRNA deacylase of Salmonella arizonae (strain ATCC BAA-731 / CDC346-86 / RSK2980).